Consider the following 378-residue polypeptide: Isobutylamine N-hydroxylase (378 aa).

In terms of assembly, exists in dimeric or trimeric form depending upon buffer conditions. It can form an isobutylamine N-hydroxylase two component enzyme system formed of a flavin reductase component (VlmR) and a monooxygenase component (VlmH).

It carries out the reaction 2-methylpropan-1-amine + FADH2 + O2 = N-(2-methylpropyl)hydroxylamine + FAD + H2O + 2 H(+). It catalyses the reaction 2-methylpropan-1-amine + FMNH2 + O2 = N-(2-methylpropyl)hydroxylamine + FMN + H2O + 2 H(+). Inhibited by 5',5'-dithio-bis(2-nitrobenzoic acid) (DTNB) and 4-(hydroxymercuri)benzoic acid (p-HMB). Functionally, involved in the biosynthesis of the azoxy antibiotic valanimycin, which has an antitumor activity. Catalyzes the oxidation of isobutylamine to isobutylhydroxylamine via the formation of a flavin 4a-hydroperoxide. Unlike other known N-hydroxylases, isobutylamine N-hydroxylase cannot carry out the reduction of the flavin cofactor and requires the NADPH-flavin oxidoreductase VlmR. Also able to oxidize propan-1-amine, butan-1-amine, butan-2-amine and benzylamine. It has a similar activity with either FMNH(2) or FADH(2). The protein is Isobutylamine N-hydroxylase of Streptomyces viridifaciens.